A 431-amino-acid polypeptide reads, in one-letter code: Phosphoribosylamine--glycine ligase (431 aa).

In terms of domain architecture, ATP-grasp spans lysine 109–aspartate 316. Valine 135–serine 196 is a binding site for ATP. Mg(2+)-binding residues include glutamate 286 and asparagine 288.

The protein belongs to the GARS family. Mg(2+) is required as a cofactor. Requires Mn(2+) as cofactor.

It carries out the reaction 5-phospho-beta-D-ribosylamine + glycine + ATP = N(1)-(5-phospho-beta-D-ribosyl)glycinamide + ADP + phosphate + H(+). It participates in purine metabolism; IMP biosynthesis via de novo pathway; N(1)-(5-phospho-D-ribosyl)glycinamide from 5-phospho-alpha-D-ribose 1-diphosphate: step 2/2. The chain is Phosphoribosylamine--glycine ligase from Xanthomonas campestris pv. campestris (strain ATCC 33913 / DSM 3586 / NCPPB 528 / LMG 568 / P 25).